The following is a 307-amino-acid chain: UPF0282 protein PH1002 (307 aa).

The protein belongs to the UPF0282 family.

This is UPF0282 protein PH1002 from Pyrococcus horikoshii (strain ATCC 700860 / DSM 12428 / JCM 9974 / NBRC 100139 / OT-3).